The sequence spans 441 residues: Histidinol dehydrogenase (441 aa).

Positions 136, 197, and 220 each coordinate NAD(+). Residues serine 243, glutamine 265, and histidine 268 each coordinate substrate. 2 residues coordinate Zn(2+): glutamine 265 and histidine 268. Active-site proton acceptor residues include glutamate 333 and histidine 334. Positions 334, 367, 421, and 426 each coordinate substrate. Aspartate 367 contributes to the Zn(2+) binding site. Histidine 426 lines the Zn(2+) pocket.

This sequence belongs to the histidinol dehydrogenase family. The cofactor is Zn(2+).

It carries out the reaction L-histidinol + 2 NAD(+) + H2O = L-histidine + 2 NADH + 3 H(+). The protein operates within amino-acid biosynthesis; L-histidine biosynthesis; L-histidine from 5-phospho-alpha-D-ribose 1-diphosphate: step 9/9. Catalyzes the sequential NAD-dependent oxidations of L-histidinol to L-histidinaldehyde and then to L-histidine. This chain is Histidinol dehydrogenase, found in Pseudomonas putida (strain ATCC 47054 / DSM 6125 / CFBP 8728 / NCIMB 11950 / KT2440).